The sequence spans 647 residues: DNA ligase (647 aa).

NAD(+) is bound by residues 30–34, 79–80, and Glu-105; these read DEEYD and SM. The active-site N6-AMP-lysine intermediate is the Lys-107. The NAD(+) site is built by Arg-128, Glu-162, and Lys-301. Zn(2+) contacts are provided by Cys-395, Cys-398, Cys-411, and Cys-416. The 78-residue stretch at 570-647 folds into the BRCT domain; sequence KSDSVIFGKT…ESAFNELVKE (78 aa).

It belongs to the NAD-dependent DNA ligase family. LigA subfamily. The cofactor is Mg(2+). Requires Mn(2+) as cofactor.

The enzyme catalyses NAD(+) + (deoxyribonucleotide)n-3'-hydroxyl + 5'-phospho-(deoxyribonucleotide)m = (deoxyribonucleotide)n+m + AMP + beta-nicotinamide D-nucleotide.. Functionally, DNA ligase that catalyzes the formation of phosphodiester linkages between 5'-phosphoryl and 3'-hydroxyl groups in double-stranded DNA using NAD as a coenzyme and as the energy source for the reaction. It is essential for DNA replication and repair of damaged DNA. This is DNA ligase from Campylobacter jejuni subsp. doylei (strain ATCC BAA-1458 / RM4099 / 269.97).